A 460-amino-acid polypeptide reads, in one-letter code: Lipase member H-A (460 aa).

An N-terminal signal peptide occupies residues 1–26 (MLLSFYFNGLLLVGCLLSWGRSDTEG). N-linked (GlcNAc...) asparagine glycans are attached at residues Asn-67 and Asn-75. Residue Ser-163 is the Nucleophile of the active site. Asn-177 carries N-linked (GlcNAc...) asparagine glycosylation. Asp-187 (charge relay system) is an active-site residue. Cys-242 and Cys-255 form a disulfide bridge. His-257 functions as the Charge relay system in the catalytic mechanism. 2 cysteine pairs are disulfide-bonded: Cys-279–Cys-290 and Cys-293–Cys-301. N-linked (GlcNAc...) asparagine glycosylation is present at Asn-289. Asn-366 carries an N-linked (GlcNAc...) asparagine glycan. A disulfide bridge connects residues Cys-436 and Cys-455.

The protein belongs to the AB hydrolase superfamily. Lipase family.

The protein resides in the secreted. It localises to the cell membrane. It catalyses the reaction 1-hexadecanoyl-2-(9Z-octadecenoyl)-sn-glycero-3-phosphate + H2O = 2-(9Z-octadecenoyl)-sn-glycero-3-phosphate + hexadecanoate + H(+). Hydrolyzes specifically phosphatidic acid (PA) to produce 2-acyl lysophosphatidic acid (LPA; a potent bioactive lipid mediator) and fatty acid. Does not hydrolyze other phospholipids, like phosphatidylserine (PS), phosphatidylcholine (PC) and phosphatidylethanolamine (PE) or triacylglycerol (TG). This Xenopus laevis (African clawed frog) protein is Lipase member H-A (liph-a).